The chain runs to 380 residues: MTDYPIKYRLIKAEKHTGARLGEIITPHGTFPTPMFMPVGTQATVKTQSPEELKAIGSGIILSNTYHLWLRPGDELIARSGGLHKFMNWDQPILTDSGGFQVYSLADSRNITEEGVTFKNHLNGSKMFLSPEKAISIQNNLGSDIMMSFDECPQFYQPYDYVKKSIERTSRWAERGLKAHRRPHDQGLFGIVQGAGFEDLRRQSAADLVAMDFPGYSIGGLAVGESHEEMNAVLDFTTPLLPENKPRYLMGVGAPDSLIDGVIRGVDMFDCVLPTRIARNGTCMTSEGRLVIKNAKFAEDFTPLDHDCDCYTCQNYSRAYIRHLLKADETFGIRLTSYHNLYFLVNLMKKVRQAIMDDNLLEFRQDFLERYGYNKSNRNF.

Catalysis depends on Asp96, which acts as the Proton acceptor. Substrate-binding positions include 96-100 (DSGGF), Asp150, Gln193, and Gly220. An RNA binding region spans residues 251-257 (GVGAPDS). The Nucleophile role is filled by Asp270. Residues 275-279 (TRIAR) form an RNA binding; important for wobble base 34 recognition region. Zn(2+) contacts are provided by Cys308, Cys310, Cys313, and His339.

The protein belongs to the queuine tRNA-ribosyltransferase family. As to quaternary structure, homodimer. Within each dimer, one monomer is responsible for RNA recognition and catalysis, while the other monomer binds to the replacement base PreQ1. It depends on Zn(2+) as a cofactor.

The enzyme catalyses 7-aminomethyl-7-carbaguanine + guanosine(34) in tRNA = 7-aminomethyl-7-carbaguanosine(34) in tRNA + guanine. It participates in tRNA modification; tRNA-queuosine biosynthesis. Catalyzes the base-exchange of a guanine (G) residue with the queuine precursor 7-aminomethyl-7-deazaguanine (PreQ1) at position 34 (anticodon wobble position) in tRNAs with GU(N) anticodons (tRNA-Asp, -Asn, -His and -Tyr). Catalysis occurs through a double-displacement mechanism. The nucleophile active site attacks the C1' of nucleotide 34 to detach the guanine base from the RNA, forming a covalent enzyme-RNA intermediate. The proton acceptor active site deprotonates the incoming PreQ1, allowing a nucleophilic attack on the C1' of the ribose to form the product. After dissociation, two additional enzymatic reactions on the tRNA convert PreQ1 to queuine (Q), resulting in the hypermodified nucleoside queuosine (7-(((4,5-cis-dihydroxy-2-cyclopenten-1-yl)amino)methyl)-7-deazaguanosine). This is Queuine tRNA-ribosyltransferase from Streptococcus pyogenes serotype M1.